We begin with the raw amino-acid sequence, 511 residues long: 2,3-bisphosphoglycerate-independent phosphoglycerate mutase (511 aa).

D14 and S64 together coordinate Mn(2+). S64 functions as the Phosphoserine intermediate in the catalytic mechanism. Substrate contacts are provided by residues H125, 155–156 (RD), R187, R193, 259–262 (RADR), and K333. Residues D400, H404, D441, H442, and H460 each coordinate Mn(2+).

It belongs to the BPG-independent phosphoglycerate mutase family. In terms of assembly, monomer. It depends on Mn(2+) as a cofactor.

It catalyses the reaction (2R)-2-phosphoglycerate = (2R)-3-phosphoglycerate. The protein operates within carbohydrate degradation; glycolysis; pyruvate from D-glyceraldehyde 3-phosphate: step 3/5. Functionally, catalyzes the interconversion of 2-phosphoglycerate and 3-phosphoglycerate. In Pseudomonas putida (strain ATCC 47054 / DSM 6125 / CFBP 8728 / NCIMB 11950 / KT2440), this protein is 2,3-bisphosphoglycerate-independent phosphoglycerate mutase.